The chain runs to 142 residues: Nucleoside diphosphate kinase (142 aa).

Positions 11, 59, 87, 93, 104, and 114 each coordinate ATP. The active-site Pros-phosphohistidine intermediate is the H117.

It belongs to the NDK family. In terms of assembly, homotetramer. Mg(2+) is required as a cofactor.

The protein localises to the cytoplasm. It carries out the reaction a 2'-deoxyribonucleoside 5'-diphosphate + ATP = a 2'-deoxyribonucleoside 5'-triphosphate + ADP. The enzyme catalyses a ribonucleoside 5'-diphosphate + ATP = a ribonucleoside 5'-triphosphate + ADP. Functionally, major role in the synthesis of nucleoside triphosphates other than ATP. The ATP gamma phosphate is transferred to the NDP beta phosphate via a ping-pong mechanism, using a phosphorylated active-site intermediate. In Yersinia pestis bv. Antiqua (strain Antiqua), this protein is Nucleoside diphosphate kinase.